A 127-amino-acid chain; its full sequence is Large ribosomal subunit protein bL12 (127 aa).

The protein belongs to the bacterial ribosomal protein bL12 family. Homodimer. Part of the ribosomal stalk of the 50S ribosomal subunit. Forms a multimeric L10(L12)X complex, where L10 forms an elongated spine to which 2 to 4 L12 dimers bind in a sequential fashion. Binds GTP-bound translation factors.

Its function is as follows. Forms part of the ribosomal stalk which helps the ribosome interact with GTP-bound translation factors. Is thus essential for accurate translation. The polypeptide is Large ribosomal subunit protein bL12 (Pelobacter propionicus (strain DSM 2379 / NBRC 103807 / OttBd1)).